We begin with the raw amino-acid sequence, 218 residues long: MRVILLGAPGAGKGTQAQFITEEFGIPQISTGDMLRAAVKAGSEMGLKAKAVMDAGQLVSDDIIIGLVKERLTQDDCANGALFDGFPRTIPQADALKDAGVEIDYVVEIDVADEEIVKRMSGRRVHEASGRTYHLVYNPPKVEGKDDVTGEDLVQRADDTEETVRLRLGVYHDQTAPLIGYYQDWLKADSATAPKFVKVNGIGDLNEIKQSLLASLKA.

ATP is bound at residue 10 to 15 (GAGKGT). The segment at 30-59 (STGDMLRAAVKAGSEMGLKAKAVMDAGQLV) is NMP. AMP-binding positions include Thr31, Arg36, 57–59 (QLV), 85–88 (GFPR), and Gln92. An LID region spans residues 122-159 (GRRVHEASGRTYHLVYNPPKVEGKDDVTGEDLVQRADD). ATP-binding positions include Arg123 and 132-133 (TY). Residues Arg156 and Arg167 each contribute to the AMP site. Gly203 contributes to the ATP binding site.

It belongs to the adenylate kinase family. As to quaternary structure, monomer.

The protein localises to the cytoplasm. It catalyses the reaction AMP + ATP = 2 ADP. It participates in purine metabolism; AMP biosynthesis via salvage pathway; AMP from ADP: step 1/1. Catalyzes the reversible transfer of the terminal phosphate group between ATP and AMP. Plays an important role in cellular energy homeostasis and in adenine nucleotide metabolism. This chain is Adenylate kinase, found in Marinomonas sp. (strain MWYL1).